Consider the following 1093-residue polypeptide: GPI ethanolamine phosphate transferase 3, catalytic subunit (1093 aa).

The helical transmembrane segment at 4–24 (VSVLLFLAWVCFLFYAGIALF) threads the bilayer. N-linked (GlcNAc...) asparagine glycosylation is present at Asn-268. The next 9 helical transmembrane spans lie at 460–480 (AAACLLCLLASQLAVAPGFLF), 483–503 (LLLIPVAWGLTWTILYAGVSV), 512–532 (VVLGAVAAAGSLLPFLWKAWV), 669–689 (LWYGACVGALVALLVVVRLWL), 702–722 (VLFVRWGMPLMVLGTAAYWAL), 748–768 (VMGLAALGLVLLLWRPVTVLV), 831–851 (SVYSAAMVTALLLLAFPLMLL), 856–876 (VSLVFLLLFLQSFLLLHLLAA), and 945–965 (FASHLLFAVGCPLLLLWPFLC). A disordered region spans residues 971-991 (KRRQPLPGSESEARVRPEEEE). 2 helical membrane-spanning segments follow: residues 1018–1038 (LKYLFILGAQILACALAASIL) and 1052–1072 (FIFEAVGFIVSSVGLLLGIAL).

This sequence belongs to the PIGG/PIGN/PIGO family. PIGO subfamily. Forms the ethanolamine phosphate transferase 3 complex composed by PIGO and PIGF. PIGF is required to stabilize PIGO.

Its subcellular location is the endoplasmic reticulum membrane. It functions in the pathway glycolipid biosynthesis; glycosylphosphatidylinositol-anchor biosynthesis. Catalytic subunit of the ethanolamine phosphate transferase 3 complex that transfers an ethanolamine phosphate (EtNP) from a phosphatidylethanolamine (PE) to the 6-OH position of the third alpha-1,2-linked mannose of the an alpha-D-Man-(1-&gt;2)-alpha-D-Man-(1-&gt;6)-2-PEtn-alpha-D-Man-(1-&gt;4)-alpha-D-GlcN-(1-&gt;6)-(1-radyl,2-acyl-sn-glycero-3-phospho)-2-acyl-inositol (also termed H6) intermediate to generate a 6-PEtn-alpha-D-Man-(1-&gt;2)-alpha-D-Man-(1-&gt;6)-2-PEtn-alpha-D-Man-(1-&gt;4)-alpha-D-GlcN-(1-&gt;6)-(1-radyl,2-acyl-sn-glycero-3-phospho)-2-acyl-inositol (also termed H7) and participates in the tenth step of the glycosylphosphatidylinositol-anchor biosynthesis. The polypeptide is GPI ethanolamine phosphate transferase 3, catalytic subunit (Mus musculus (Mouse)).